We begin with the raw amino-acid sequence, 947 residues long: Valine--tRNA ligase (947 aa).

The 'HIGH' region motif lies at 45-55; the sequence is PNVTGSLHMGH. Positions 591 to 595 match the 'KMSKS' region motif; that stretch reads KMSKS. Lys594 provides a ligand contact to ATP.

It belongs to the class-I aminoacyl-tRNA synthetase family. ValS type 1 subfamily. As to quaternary structure, monomer.

Its subcellular location is the cytoplasm. It catalyses the reaction tRNA(Val) + L-valine + ATP = L-valyl-tRNA(Val) + AMP + diphosphate. Functionally, catalyzes the attachment of valine to tRNA(Val). As ValRS can inadvertently accommodate and process structurally similar amino acids such as threonine, to avoid such errors, it has a 'posttransfer' editing activity that hydrolyzes mischarged Thr-tRNA(Val) in a tRNA-dependent manner. This Rhizobium meliloti (strain 1021) (Ensifer meliloti) protein is Valine--tRNA ligase.